The primary structure comprises 117 residues: Photosystem II reaction center Psb28 protein (117 aa).

The protein belongs to the Psb28 family. As to quaternary structure, part of the photosystem II complex.

It localises to the cellular thylakoid membrane. The protein is Photosystem II reaction center Psb28 protein of Prochlorococcus marinus (strain MIT 9215).